A 231-amino-acid chain; its full sequence is DNA mismatch repair protein MutH (231 aa).

The protein belongs to the MutH family.

It is found in the cytoplasm. Functionally, sequence-specific endonuclease that cleaves unmethylated GATC sequences. It is involved in DNA mismatch repair. This Klebsiella pneumoniae subsp. pneumoniae (strain ATCC 700721 / MGH 78578) protein is DNA mismatch repair protein MutH.